A 349-amino-acid chain; its full sequence is MISSADSGRDAAWLDDFLALTLAGGTPPAHAGECAAHAVRWRWLGDGLLQFEPVDATRRMQSVLVSAGVHGDETAPIELLSMLVRDIAHGALPLRCRLLVALGNPGAMRAGERYLDDDLNRLFGGRHAPLATSREAPRAAQLEAAASAFFATAGRARGARWHIDMHTAIRASVFEQFALLPHTGEPPTRTMFEWLGEARIAAVLLHTAKGSTFSHFTAQTCGALACTLELGKVMPFGANDLSRFARADAAVRNLVSGRRDAARAALPRVFTVVDQITKQSDALELFVEKDVPNFTPFAQGTLLARDGDYRYAVRHAQERIVFPNPSVKPGLRAGLLVVETTLDTHAALA.

His70, Glu73, and His166 together coordinate Zn(2+). Glu229 is a catalytic residue.

The protein belongs to the AspA/AstE family. Succinylglutamate desuccinylase subfamily. Zn(2+) serves as cofactor.

The catalysed reaction is N-succinyl-L-glutamate + H2O = L-glutamate + succinate. It participates in amino-acid degradation; L-arginine degradation via AST pathway; L-glutamate and succinate from L-arginine: step 5/5. Its function is as follows. Transforms N(2)-succinylglutamate into succinate and glutamate. In Burkholderia thailandensis (strain ATCC 700388 / DSM 13276 / CCUG 48851 / CIP 106301 / E264), this protein is Succinylglutamate desuccinylase.